Here is a 243-residue protein sequence, read N- to C-terminus: Tryptophan synthase alpha chain (243 aa).

Catalysis depends on proton acceptor residues glutamate 31 and aspartate 42.

Belongs to the TrpA family. In terms of assembly, tetramer of two alpha and two beta chains.

The enzyme catalyses (1S,2R)-1-C-(indol-3-yl)glycerol 3-phosphate + L-serine = D-glyceraldehyde 3-phosphate + L-tryptophan + H2O. It functions in the pathway amino-acid biosynthesis; L-tryptophan biosynthesis; L-tryptophan from chorismate: step 5/5. The alpha subunit is responsible for the aldol cleavage of indoleglycerol phosphate to indole and glyceraldehyde 3-phosphate. The protein is Tryptophan synthase alpha chain of Staphylococcus epidermidis (strain ATCC 35984 / DSM 28319 / BCRC 17069 / CCUG 31568 / BM 3577 / RP62A).